Consider the following 179-residue polypeptide: Cytochrome c-type biogenesis protein CcmE (179 aa).

Over 1–8 (MTPRRKSR) the chain is Cytoplasmic. A helical; Signal-anchor for type II membrane protein membrane pass occupies residues 9 to 29 (MTVILFVLLGISIASALVLYA). The Periplasmic portion of the chain corresponds to 30–179 (LRQNIDLFYT…QKTSMQEGQK (150 aa)). Residues His-131 and Tyr-135 each contribute to the heme site. The segment at 151-179 (MGVADLKGESERDRQEKAYQKTSMQEGQK) is disordered. Basic and acidic residues predominate over residues 156–169 (LKGESERDRQEKAY). Over residues 170–179 (QKTSMQEGQK) the composition is skewed to polar residues.

This sequence belongs to the CcmE/CycJ family.

The protein localises to the cell inner membrane. In terms of biological role, heme chaperone required for the biogenesis of c-type cytochromes. Transiently binds heme delivered by CcmC and transfers the heme to apo-cytochromes in a process facilitated by CcmF and CcmH. The polypeptide is Cytochrome c-type biogenesis protein CcmE (Pasteurella multocida (strain Pm70)).